The following is a 361-amino-acid chain: Zinc transporter ZIP13 (361 aa).

At 1-6 (MPGCPC) the chain is on the lumenal side. The chain crosses the membrane as a helical span at residues 7-27 (PGCGMAGQRLLFLTVLALELL). The Cytoplasmic portion of the chain corresponds to 28 to 68 (ERAGGSQPALRSLGAAAACRLDNKESESWGALLSGERLDTW). The helical transmembrane segment at 69 to 89 (ICSLLGSLMVGLSGVFPLLVI) threads the bilayer. The Lumenal segment spans residues 90–108 (PLEMGTLLQSEAGAWRLRQ). The helical transmembrane segment at 109–129 (LLSFALGGLLGNVFLHLLPEA) threads the bilayer. Residues 130 to 150 (WAYTCNITPGGEGQSLQRQQQ) lie on the Cytoplasmic side of the membrane. A helical membrane pass occupies residues 151-171 (LGLWVIAGFLTFLALEKMFLN). Topologically, residues 172 to 232 (SKEDPSQAPS…TIDNFTHGLA (61 aa)) are lumenal. The helical transmembrane segment at 233-253 (VAASFLVSKKIGLLTTMAILL) threads the bilayer. The XEXPHE-motif signature appears at 254-259 (HEIPHE). Residues 254-275 (HEIPHEVGDFAILLRAGFDRWT) are Cytoplasmic-facing. Residues 276-296 (AAKLQFSTALGGLLGACFAIC) traverse the membrane as a helical segment. Residues 297–306 (TQSPKGVEET) lie on the Lumenal side of the membrane. Residues 307–327 (VVWILPFTSGGFLYIALVNVL) form a helical membrane-spanning segment. Residues 328–339 (PDLLEEDDPWHS) lie on the Cytoplasmic side of the membrane. Residues 340-360 (LQQVLLLCSGVLVMVLLSLFV) form a helical membrane-spanning segment. Position 361 (E361) is a topological domain, lumenal.

This sequence belongs to the ZIP transporter (TC 2.A.5) family. In terms of assembly, homodimer. In terms of tissue distribution, highly expressed in some tissues such as bone and eye. Expressed in osteoblasts of tibia and of alveolar bone, in proliferative zone of growth plate, and in odontoblasts on the forming of the dentine of crown in molar tooth. Also expressed fibroblasts in reticular layer of dermis of skin.

Its subcellular location is the golgi apparatus membrane. The protein localises to the cytoplasmic vesicle membrane. The protein resides in the endoplasmic reticulum membrane. The catalysed reaction is Zn(2+)(in) = Zn(2+)(out). Functionally, functions as a zinc transporter transporting Zn(2+) from the Golgi apparatus to the cytosol and thus influences the zinc level at least in areas of the cytosol. May regulate beige adipocyte differentiation. The polypeptide is Zinc transporter ZIP13 (Mus musculus (Mouse)).